Here is a 301-residue protein sequence, read N- to C-terminus: Ribosomal protein L11 methyltransferase (301 aa).

Residues Thr-130, Gly-151, Asp-172, and Asn-239 each contribute to the S-adenosyl-L-methionine site.

This sequence belongs to the methyltransferase superfamily. PrmA family.

The protein resides in the cytoplasm. It carries out the reaction L-lysyl-[protein] + 3 S-adenosyl-L-methionine = N(6),N(6),N(6)-trimethyl-L-lysyl-[protein] + 3 S-adenosyl-L-homocysteine + 3 H(+). Methylates ribosomal protein L11. The protein is Ribosomal protein L11 methyltransferase of Campylobacter hominis (strain ATCC BAA-381 / DSM 21671 / CCUG 45161 / LMG 19568 / NCTC 13146 / CH001A).